A 754-amino-acid polypeptide reads, in one-letter code: Exocyst complex component EXO84A (754 aa).

Disordered regions lie at residues 514 to 540 and 734 to 754; these read RILP…EQRE and GHGE…YTSN. Over residues 518–527 the composition is skewed to polar residues; it reads QGTSQSTPRR. Residues 528–540 are compositionally biased toward basic and acidic residues; sequence GSSDRQNRPEQRE. Positions 741 to 754 are enriched in polar residues; it reads TSPSVSSAKSYTSN.

The protein belongs to the EXO84 family. The exocyst complex is composed of SEC3, SEC5, SEC6, SEC8, SEC10, EXO70A1 and EXO84.

Its function is as follows. Component of the exocyst complex involved in the docking of exocytic vesicles with fusion sites on the plasma membrane during regulated or polarized secretion. Involved in polarized cell growth and organ morphogenesis. During cytokinesis, involved in cell plate initiation, cell plate maturation and formation of new primary cell wall. In Arabidopsis thaliana (Mouse-ear cress), this protein is Exocyst complex component EXO84A (EXO84A).